The sequence spans 570 residues: Pentatricopeptide repeat-containing protein At1g31430 (570 aa).

PPR repeat units follow at residues 10–44 (SLLM…GLYP), 45–79 (DNFT…GLEF), 80–110 (DSYV…MPQR), 111–141 (DVVS…MSQE), 147–177 (DEGT…VVTE), 181–215 (SVRI…NVKC), 216–242 (WTSM…SPVK), 243–277 (DVVL…GIRP), 278–312 (DNFV…RVTV), 313–343 (DKVV…IKER), 344–378 (DTAS…GVRL), 379–414 (DAIT…NVQP), and 415–449 (KSEH…SDET). Residues 453 to 528 (VYCSLLSAAR…FPGCSSIEID (76 aa)) are type E motif. The interval 529-561 (GVGHEFIVGDDLLSHPKMDEINSMLHQTTNLML) is type E(+) motif.

The protein belongs to the PPR family. PCMP-E subfamily.

The sequence is that of Pentatricopeptide repeat-containing protein At1g31430 (PCMP-E55) from Arabidopsis thaliana (Mouse-ear cress).